Reading from the N-terminus, the 471-residue chain is UDP-glycosyltransferase 1 (471 aa).

H15 functions as the Proton acceptor in the catalytic mechanism. An anthocyanidin is bound at residue H15. The active-site Charge relay is the D124. The UDP-alpha-D-glucose site is built by T146, A348, Q350, H365, W368, N369, S370, and E373. Position 388 (A388) interacts with an anthocyanidin. E389 and Q390 together coordinate UDP-alpha-D-glucose.

Belongs to the UDP-glycosyltransferase family. As to expression, expressed in roots. Detected in stems and leaves.

It catalyses the reaction a 7-hydroxyisoflavone + UDP-alpha-D-glucose = a 7-hydroxyisoflavone 7-O-beta-D-glucoside + UDP + H(+). Its function is as follows. Isoflavone 7-O-glucosyltransferase converting daidzein to daidzin, genistein to genistin and formononetin to ononin. Shows some activity toward the chalcone isoliquiritigenin, the flavanones liquiritigenin and naringenin, and the flavone apigenin, but not toward cyanidin, luteolin, kaempferol, quercetin, daidzin and puerarin. The polypeptide is UDP-glycosyltransferase 1 (Pueraria montana var. lobata (Kudzu vine)).